A 175-amino-acid polypeptide reads, in one-letter code: RNA pyrophosphohydrolase (175 aa).

The 144-residue stretch at 7 to 150 folds into the Nudix hydrolase domain; sequence GYRLNVGIIL…KRQVYIQALK (144 aa). A Nudix box motif is present at residues 39 to 60; it reads GGLAPGETAMQAMYRELHEEVG.

Belongs to the Nudix hydrolase family. RppH subfamily. It depends on a divalent metal cation as a cofactor.

Functionally, accelerates the degradation of transcripts by removing pyrophosphate from the 5'-end of triphosphorylated RNA, leading to a more labile monophosphorylated state that can stimulate subsequent ribonuclease cleavage. This Legionella pneumophila (strain Paris) protein is RNA pyrophosphohydrolase.